Consider the following 392-residue polypeptide: uncharacterized protein (392 aa).

It belongs to the chlamydial CPn_0675/CT_696/TC_0068 family.

This is an uncharacterized protein from Chlamydia trachomatis serovar D (strain ATCC VR-885 / DSM 19411 / UW-3/Cx).